Consider the following 264-residue polypeptide: JmjC domain-containing protein 8 (264 aa).

An N-terminal signal peptide occupies residues 1–23; the sequence is MAPASRLLALWALAAVALPGSGA. N-linked (GlcNAc...) asparagine glycans are attached at residues Asn130, Asn140, and Asn209. In terms of domain architecture, JmjC spans 131–264; the sequence is DTLYFFGDNN…TSVFISTFLG (134 aa).

Oligomer. Dimer. Interacts with PKM; regulates angiogenesis and metabolism. In terms of processing, N-glycosylated.

It is found in the endoplasmic reticulum lumen. It localises to the cytoplasm. Its function is as follows. Functions as a positive regulator of TNF-induced NF-kappa-B signaling. Regulates angiogenesis and cellular metabolism through interaction with PKM. The sequence is that of JmjC domain-containing protein 8 from Homo sapiens (Human).